Consider the following 1005-residue polypeptide: Probable beta-galactosidase A (1005 aa).

The signal sequence occupies residues 1–18; the sequence is MKLLSVAAVALLAAQAAG. Substrate is bound by residues tyrosine 96, asparagine 140, alanine 141, and glutamate 142. Asparagine 156 carries an N-linked (GlcNAc...) asparagine glycan. Asparagine 199 is a binding site for substrate. Residue glutamate 200 is the Proton donor of the active site. An intrachain disulfide couples cysteine 205 to cysteine 206. Tyrosine 260 contributes to the substrate binding site. A disulfide bond links cysteine 266 and cysteine 315. The active-site Nucleophile is glutamate 298. Tyrosine 364 serves as a coordination point for substrate. 10 N-linked (GlcNAc...) asparagine glycosylation sites follow: asparagine 373, asparagine 402, asparagine 453, asparagine 478, asparagine 522, asparagine 622, asparagine 760, asparagine 777, asparagine 805, and asparagine 914.

It belongs to the glycosyl hydrolase 35 family.

It localises to the secreted. The enzyme catalyses Hydrolysis of terminal non-reducing beta-D-galactose residues in beta-D-galactosides.. Functionally, cleaves beta-linked terminal galactosyl residues from gangliosides, glycoproteins, and glycosaminoglycans. This Aspergillus flavus (strain ATCC 200026 / FGSC A1120 / IAM 13836 / NRRL 3357 / JCM 12722 / SRRC 167) protein is Probable beta-galactosidase A (lacA).